Consider the following 389-residue polypeptide: Galactokinase (389 aa).

Glutamate 34 to aspartate 37 is a binding site for substrate. ATP is bound by residues serine 68 and glycine 125–serine 131. The Mg(2+) site is built by serine 131 and glutamate 163. The active-site Proton acceptor is aspartate 175. Tyrosine 225 is a binding site for substrate.

The protein belongs to the GHMP kinase family. GalK subfamily.

Its subcellular location is the cytoplasm. The enzyme catalyses alpha-D-galactose + ATP = alpha-D-galactose 1-phosphate + ADP + H(+). The protein operates within carbohydrate metabolism; galactose metabolism. Its function is as follows. Catalyzes the transfer of the gamma-phosphate of ATP to D-galactose to form alpha-D-galactose-1-phosphate (Gal-1-P). The sequence is that of Galactokinase from Clostridium acetobutylicum (strain ATCC 824 / DSM 792 / JCM 1419 / IAM 19013 / LMG 5710 / NBRC 13948 / NRRL B-527 / VKM B-1787 / 2291 / W).